A 481-amino-acid polypeptide reads, in one-letter code: Ribosomal protein uS12 methylthiotransferase RimO (481 aa).

In terms of domain architecture, MTTase N-terminal spans 38-148 (NRIGFVSLGC…VLKHVHKYVP (111 aa)). Positions 47, 83, 112, 180, 184, and 187 each coordinate [4Fe-4S] cluster. Residues 166-403 (LTPKHYAYLK…MEVQAEISAE (238 aa)) enclose the Radical SAM core domain. The TRAM domain maps to 406–472 (ARFVGRTMDI…EHDLWAELVD (67 aa)).

It belongs to the methylthiotransferase family. RimO subfamily. The cofactor is [4Fe-4S] cluster.

The protein resides in the cytoplasm. It carries out the reaction L-aspartate(89)-[ribosomal protein uS12]-hydrogen + (sulfur carrier)-SH + AH2 + 2 S-adenosyl-L-methionine = 3-methylsulfanyl-L-aspartate(89)-[ribosomal protein uS12]-hydrogen + (sulfur carrier)-H + 5'-deoxyadenosine + L-methionine + A + S-adenosyl-L-homocysteine + 2 H(+). Its function is as follows. Catalyzes the methylthiolation of an aspartic acid residue of ribosomal protein uS12. This is Ribosomal protein uS12 methylthiotransferase RimO from Shewanella oneidensis (strain ATCC 700550 / JCM 31522 / CIP 106686 / LMG 19005 / NCIMB 14063 / MR-1).